The following is a 472-amino-acid chain: MKPVIALVGRPNVGKSTLFNRMTRSRDAIVANLPGLTRDRKYGEGELEGKHYIVVDTGGITGEEQGIDAAMAGQSFTAMNEADVVLFVVDAQAGVTPADEMIAKELRVRGKPTILVVNKIDGMQPEVAAADFFAMGFQEYMYTAAAHNRGVRSLLEKALEPFPEQEPLEGEDDSGIRIGIIGRPNVGKSTLVNRLLGEDRVVVFDQPGTTRDSVYIPYERLGERYTLIDTAGVRRRKNVSEAVEKFSIVKTLQAIKDAHVVVLVLDAREGIVDQDLHLLGFAIEAGRALVLAINKWDGMSQDDKDEVRREIDRRMGFVEYAQIHFISALHGTGVGHLYESVHECFDSAMAKWSTNQLTTLLEDAVSQHQPPMVNGRRIKLRYAHQGGSNPPLIIVHGNQTDALPNSYKRYLENTFRKVLKVVGTPIRFEFRSGENPFAGKKNKLSPRQQKKKERLMKHVKKLKHKQKRKKSR.

2 EngA-type G domains span residues 3-166 (PVIA…PEQE) and 176-349 (IRIG…DSAM). GTP-binding positions include 9-16 (GRPNVGKS), 56-60 (DTGGI), 118-121 (NKID), 182-189 (GRPNVGKS), 229-233 (DTAGV), and 294-297 (NKWD). In terms of domain architecture, KH-like spans 350–434 (AKWSTNQLTT…PIRFEFRSGE (85 aa)). The disordered stretch occupies residues 433-472 (GENPFAGKKNKLSPRQQKKKERLMKHVKKLKHKQKRKKSR). Over residues 440–472 (KKNKLSPRQQKKKERLMKHVKKLKHKQKRKKSR) the composition is skewed to basic residues.

Belongs to the TRAFAC class TrmE-Era-EngA-EngB-Septin-like GTPase superfamily. EngA (Der) GTPase family. As to quaternary structure, associates with the 50S ribosomal subunit.

Functionally, GTPase that plays an essential role in the late steps of ribosome biogenesis. The polypeptide is GTPase Der (Hahella chejuensis (strain KCTC 2396)).